We begin with the raw amino-acid sequence, 132 residues long: MSMTDPIADMLTRIRNAGMAKHQKVDIPSSNLKVSLANLLRNEGFIKNYKVIADNKQGVLRVYLKYIDEKDHVINEIKRVSKPGGRVYVDSDGIPKVKNGLGVAVLSTSKGIITDKSAREFGIGGELICTVW.

Belongs to the universal ribosomal protein uS8 family. Part of the 30S ribosomal subunit. Contacts proteins S5 and S12.

Functionally, one of the primary rRNA binding proteins, it binds directly to 16S rRNA central domain where it helps coordinate assembly of the platform of the 30S subunit. The polypeptide is Small ribosomal subunit protein uS8 (Geotalea daltonii (strain DSM 22248 / JCM 15807 / FRC-32) (Geobacter daltonii)).